Here is a 678-residue protein sequence, read N- to C-terminus: Zinc finger translocation-associated protein (678 aa).

Disordered stretches follow at residues 1–100 (MEPG…PGRD), 182–250 (LGVQ…GSRG), 329–417 (QPEA…HRRH), and 490–583 (LGPP…NYQP). The segment covering 62 to 78 (SAPLPSSRARGPASSGR) has biased composition (low complexity). A compositionally biased stretch (basic and acidic residues) spans 79 to 88 (KYSDHCEARA). The span at 187-201 (AEEEEEEEEEEEEEG) shows a compositional bias: acidic residues. K375 is covalently cross-linked (Glycyl lysine isopeptide (Lys-Gly) (interchain with G-Cter in SUMO2)). Residues 388 to 398 (AEEEEELEEGE) are compositionally biased toward acidic residues. A compositionally biased stretch (pro residues) spans 492 to 504 (PPRPESPQGPIPP). Acidic residues-rich tracts occupy residues 513–529 (GGGD…EEWG) and 543–553 (AEEEEDEEDGQ). The span at 560–572 (LPPPPPPPPPPPP) shows a compositional bias: pro residues. A compositionally biased stretch (basic and acidic residues) spans 573 to 583 (RSREQRRNYQP).

The sequence is that of Zinc finger translocation-associated protein from Homo sapiens (Human).